The following is a 638-amino-acid chain: Growth hormone receptor (638 aa).

A signal peptide spans 1-18 (MDLWQLLLTLALAGSSDA). The Extracellular segment spans residues 19 to 264 (FSGSEATAAI…SQFTCEEDFY (246 aa)). The N-linked (GlcNAc...) asparagine glycan is linked to N46. 2 disulfide bridges follow: C56/C66 and C101/C112. N115 carries N-linked (GlcNAc...) asparagine glycosylation. The cysteines at positions 126 and 140 are disulfide-linked. The 104-residue stretch at 151 to 254 (PPIALNWTLL…EVLYVTLPQM (104 aa)) folds into the Fibronectin type-III domain. Residues N156, N161, and N200 are each glycosylated (N-linked (GlcNAc...) asparagine). The short motif at 240–244 (YGEFS) is the WSXWS motif element. The segment at 260–262 (EED) is required for ADAM17-mediated proteolysis. A helical membrane pass occupies residues 265–288 (FPWLLIIIFGIFGLTVMLFVFLFS). Residues 289–638 (KQQRIKMLIL…STDQLNKIMP (350 aa)) are Cytoplasmic-facing. The required for JAK2 binding stretch occupies residues 294 to 379 (KMLILPPVPV…HEKSHSNLGV (86 aa)). Residues 297–305 (ILPPVPVPK) carry the Box 1 motif motif. The UbE motif motif lies at 340–349 (DSWVEFIELD). S341 is modified (phosphoserine). The tract at residues 353-391 (PDEKTEESDTDRLLSSDHEKSHSNLGVKDGDSGRTSCCE) is disordered. A compositionally biased stretch (basic and acidic residues) spans 362–384 (TDRLLSSDHEKSHSNLGVKDGDS). Phosphotyrosine; by JAK2 occurs at positions 487 and 595.

It belongs to the type I cytokine receptor family. Type 1 subfamily. As to quaternary structure, on growth hormone (GH) binding, forms homodimers and binds JAK2 via a box 1-containing domain. The soluble form (GHBP) is produced by phorbol ester-promoted proteolytic cleavage at the cell surface (shedding) by ADAM17/TACE. Shedding is inhibited by growth hormone (GH) binding to the receptor probably due to a conformational change in GHR rendering the receptor inaccessible to ADAM17. In terms of processing, on GH binding, phosphorylated on tyrosine residues in the cytoplasmic domain by JAK2. Post-translationally, ubiquitinated by the ECS(SOCS2) complex following ligand-binding and phosphorylation by JAK2, leading to its degradation by the proteasome. Regulation by the ECS(SOCS2) complex acts as a negative feedback loop of growth hormone receptor signaling. Ubiquitination is not sufficient for GHR internalization. In terms of tissue distribution, expressed in various tissues with high expression in liver and skeletal muscle. Isoform 2 is expressed in lung, stomach and muscle. As to expression, predominantly expressed in kidney, bladder, adrenal gland and brain stem. Highly expressed in placental villi.

The protein resides in the cell membrane. It is found in the secreted. Receptor for pituitary gland growth hormone (GH1) involved in regulating postnatal body growth. On ligand binding, couples to the JAK2/STAT5 pathway. In terms of biological role, the soluble form (GHBP) acts as a reservoir of growth hormone in plasma and may be a modulator/inhibitor of GH signaling. Functionally, up-regulates the production of the soluble Growth hormone-binding protein form (GHBP) and acts as a negative inhibitor of growth hormone signaling. This is Growth hormone receptor (GHR) from Homo sapiens (Human).